A 2752-amino-acid polypeptide reads, in one-letter code: Serine/arginine repetitive matrix protein 2 (2752 aa).

Methionine 1 is modified (N-acetylmethionine). Residues 60–92 adopt a coiled-coil conformation; that stretch reads HERKRRVELRCLELEEMMEEQGYEEQQIQEKVA. An N6-acetyllysine modification is found at lysine 101. Glycyl lysine isopeptide (Lys-Gly) (interchain with G-Cter in SUMO2) cross-links involve residues lysine 108 and lysine 130. Residues 141–2131 are disordered; it reads ISDSYVDGSS…MSPTPLDRCR (1991 aa). Position 145 is a phosphotyrosine (tyrosine 145). Lysine 169 carries the post-translational modification N6-acetyllysine. Positions 175 to 185 are enriched in low complexity; it reads RESSSSRSPTP. 2 stretches are compositionally biased toward basic residues: residues 186-197 and 207-249; these read KQKKKKKKKDRG and RERK…KRSR. Residues 197–259 are sufficient for RNA-binding; sequence GRRSESSSPR…STTPAPKSRR (63 aa). Phosphoserine occurs at positions 220 and 222. Over residues 263-290 the composition is skewed to low complexity; that stretch reads STSADSASSSDTSRSRSRSAAAKTHTTA. Threonine 286 carries the phosphothreonine modification. Phosphoserine occurs at positions 295, 297, 300, 322, and 323. Over residues 313–333 the composition is skewed to polar residues; the sequence is PGTTSTQRPSSPETATKQPSS. The span at 335–347 shows a compositional bias: basic and acidic residues; it reads YEDKDKDKKEKSA. The span at 348 to 360 shows a compositional bias: low complexity; it reads TRPSPSPERSSTG. A phosphoserine mark is found at serine 351, serine 353, serine 357, and serine 358. Threonine 359 and threonine 367 each carry phosphothreonine. Phosphoserine is present on serine 377. The segment covering 380–398 has biased composition (polar residues); it reads PLATTPLSQEPVNPPSEAS. 2 positions are modified to phosphothreonine: threonine 383 and threonine 384. Phosphoserine occurs at positions 387, 395, 398, 404, and 408. The span at 399-410 shows a compositional bias: basic and acidic residues; the sequence is PTRDRSPPKSPE. The span at 411 to 421 shows a compositional bias: low complexity; it reads KLPQSSSSESS. Phosphoserine is present on residues serine 424, serine 435, serine 436, serine 437, serine 440, and serine 454. Residues 461–483 are compositionally biased toward basic residues; that stretch reads NRSHGRAKRDKSHSHTPSRRMGR. Serine 484, serine 486, serine 506, serine 508, serine 510, serine 534, serine 536, and serine 543 each carry phosphoserine. The segment covering 491-536 has biased composition (basic residues); sequence KRGRSRSRTPTKRGHSRSRSPQWRRSRSAQRWGRSRSPQRRGRSRS. Positions 537 to 546 are enriched in low complexity; the sequence is PQRPGWSRSR. 3 stretches are compositionally biased toward basic residues: residues 547–564, 571–723, and 732–742; these read NTQR…RSHS, GRSR…RRGR, and NKSRTSQRRSR. Phosphoserine occurs at positions 702, 704, and 706. Phosphoserine occurs at positions 778, 780, and 783. Low complexity predominate over residues 790 to 805; it reads SQTPPRRSRSGSSQPK. A compositionally biased stretch (basic residues) spans 806 to 816; the sequence is AKSRTPPRRSR. Low complexity predominate over residues 828–841; it reads KTPSRQSHSSSSPH. Serine 846 and serine 854 each carry phosphoserine. Polar residues predominate over residues 849–869; the sequence is PPRQGSITSPQANEQSVTPQR. Residue threonine 856 is modified to Phosphothreonine. Phosphoserine occurs at positions 857 and 864. Phosphothreonine is present on threonine 866. Serine 871, serine 875, serine 876, serine 908, serine 935, serine 950, serine 952, serine 954, serine 957, serine 968, serine 970, serine 972, serine 973, and serine 974 each carry phosphoserine. Composition is skewed to low complexity over residues 901-917 and 924-945; these read SSTP…SPQP and SPRQ…TSRT. Phosphothreonine is present on residues threonine 977 and threonine 983. 2 positions are modified to phosphoserine: serine 992 and serine 994. At tyrosine 996 the chain carries Phosphotyrosine. Threonine 1003 is modified (phosphothreonine). The segment covering 1008 to 1017 has biased composition (low complexity); sequence SLSGSKSPCP. 6 positions are modified to phosphoserine: serine 1010, serine 1014, serine 1024, serine 1028, serine 1032, and serine 1042. Residues 1040–1064 show a composition bias toward polar residues; the sequence is KSSTPPGESYFGVSSLQLKGQSQTS. Threonine 1043 bears the Phosphothreonine mark. Phosphotyrosine is present on tyrosine 1049. Residues serine 1064, serine 1069, serine 1072, serine 1073, serine 1083, serine 1099, serine 1101, serine 1102, and serine 1103 each carry the phosphoserine modification. Over residues 1071–1092 the composition is skewed to polar residues; it reads TSSPEVRQSHSESPSLQSKSQT. A compositionally biased stretch (low complexity) spans 1093-1104; the sequence is SPKGGRSRSSSP. At threonine 1106 the chain carries Phosphothreonine. Serine 1112, serine 1122, serine 1124, serine 1129, serine 1132, serine 1152, serine 1179, serine 1188, and serine 1198 each carry phosphoserine. Polar residues predominate over residues 1132 to 1159; sequence SPEQSRFQSDSSSYPTVDSNSLLGQSRL. The segment covering 1204-1214 has biased composition (basic and acidic residues); the sequence is DTLRTPPRERS. Position 1208 is a phosphothreonine (threonine 1208). Serine 1214, serine 1219, serine 1227, serine 1254, serine 1257, serine 1258, serine 1266, serine 1270, and serine 1271 each carry phosphoserine. Positions 1216-1233 are enriched in polar residues; that stretch reads AGSSPETKEQNSALPTSS. Residues 1283–1292 show a composition bias toward polar residues; it reads TLDQSQSQAS. 15 positions are modified to phosphoserine: serine 1311, serine 1318, serine 1320, serine 1326, serine 1329, serine 1336, serine 1348, serine 1368, serine 1382, serine 1383, serine 1384, serine 1387, serine 1401, serine 1403, and serine 1404. Residues 1318–1328 are compositionally biased toward polar residues; that stretch reads SNSPLRENSFG. Residues 1376 to 1386 are compositionally biased toward polar residues; that stretch reads TRSSGHSSSEL. The residue at position 1413 (threonine 1413) is a Phosphothreonine. Phosphoserine occurs at positions 1415, 1421, 1423, and 1424. Threonine 1434 carries the post-translational modification Phosphothreonine. The segment covering 1441-1452 has biased composition (low complexity); it reads SGSSPGLRDGSG. Serine 1444 and serine 1451 each carry phosphoserine. Threonine 1453 is modified (phosphothreonine). The span at 1453–1463 shows a compositional bias: polar residues; it reads TPSRHSLSGSS. Residues serine 1458, serine 1460, serine 1462, and serine 1463 each carry the phosphoserine modification. The residue at position 1472 (threonine 1472) is a Phosphothreonine. Serine 1482 and serine 1483 each carry phosphoserine. Residue threonine 1492 is modified to Phosphothreonine. A phosphoserine mark is found at serine 1497, serine 1499, serine 1501, and serine 1502. Threonine 1511 is modified (phosphothreonine). 4 positions are modified to phosphoserine: serine 1517, serine 1519, serine 1521, and serine 1522. Threonine 1531 is subject to Phosphothreonine. Residues 1534 to 1544 are compositionally biased toward polar residues; it reads GQRSRSGSSQE. A phosphoserine mark is found at serine 1537, serine 1539, serine 1541, serine 1542, and serine 1552. A compositionally biased stretch (basic and acidic residues) spans 1555-1567; sequence ERSESDSSPDSKA. The segment covering 1568–1577 has biased composition (basic residues); sequence KTRTPLRQRS. 15 positions are modified to phosphoserine: serine 1577, serine 1579, serine 1581, serine 1582, serine 1598, serine 1600, serine 1601, serine 1616, serine 1620, serine 1621, serine 1648, serine 1658, serine 1691, serine 1693, and serine 1694. A compositionally biased stretch (low complexity) spans 1638 to 1657; it reads SGSSSKGRGPSPEGSSSTES. Positions 1681 to 1691 are enriched in basic residues; it reads KSRTPPRRRSS. Phosphothreonine is present on threonine 1698. Serine 1727, serine 1729, serine 1731, serine 1732, serine 1762, and serine 1764 each carry phosphoserine. Basic residues-rich tracts occupy residues 1769 to 1789 and 1798 to 1816; these read GLQR…RRRD and SRRR…RRRG. Phosphoserine occurs at positions 1818, 1822, 1854, 1857, 1876, and 1878. The segment covering 1834–1854 has biased composition (basic residues); it reads SSRRRRGRSRTPPTSRKRSRS. Over residues 1862–2068 the composition is skewed to basic residues; sequence KRSRSRASPA…PRTARGKRSL (207 aa). Phosphothreonine is present on threonine 1880. Serine 1884 and serine 1890 each carry phosphoserine. A Phosphothreonine modification is found at threonine 1892. A phosphoserine mark is found at serine 1893, serine 1916, serine 1919, serine 1923, and serine 1925. Phosphothreonine is present on residues threonine 1927 and threonine 1931. A phosphoserine mark is found at serine 1946 and serine 1948. 2 positions are modified to phosphothreonine: threonine 1950 and threonine 1954. Phosphoserine is present on residues serine 1958 and serine 1960. Phosphothreonine is present on residues threonine 1962 and threonine 1966. A phosphoserine mark is found at serine 1970, serine 1972, and serine 1975. At threonine 1978 the chain carries Phosphothreonine. 8 positions are modified to phosphoserine: serine 1984, serine 1987, serine 1996, serine 1999, serine 2008, serine 2011, serine 2018, and serine 2020. Position 2022 is a phosphothreonine (threonine 2022). 2 positions are modified to phosphoserine: serine 2030 and serine 2032. Residue threonine 2034 is modified to Phosphothreonine. Phosphoserine occurs at positions 2042, 2044, 2046, and 2067. Threonine 2069 is subject to Phosphothreonine. Over residues 2070–2095 the composition is skewed to low complexity; the sequence is RSPPAIRRRSASGSSSDRSRSATPPA. A phosphoserine mark is found at serine 2071 and serine 2090. Phosphothreonine is present on threonine 2092. Over residues 2097-2124 the composition is skewed to polar residues; sequence RNHSGSRTPPVALNSSRMSCFSRPSMSP. Residues serine 2100 and serine 2102 each carry the phosphoserine modification. Position 2104 is a phosphothreonine (threonine 2104). Serine 2118, serine 2121, serine 2123, and serine 2132 each carry phosphoserine. Threonine 2144 bears the Phosphothreonine mark. Arginine 2194, arginine 2207, arginine 2231, and arginine 2246 each carry omega-N-methylarginine. The residue at position 2272 (serine 2272) is a Phosphoserine. Residues arginine 2274 and arginine 2288 each carry the omega-N-methylarginine modification. Phosphothreonine is present on residues threonine 2289, threonine 2291, and threonine 2302. The residue at position 2310 (serine 2310) is a Phosphoserine. The disordered stretch occupies residues 2311–2342; that stretch reads LTGSGTPPTAANYPSSSRTPQAPASANLVGPR. Threonine 2316 and threonine 2329 each carry phosphothreonine. Over residues 2317 to 2334 the composition is skewed to polar residues; it reads PPTAANYPSSSRTPQAPA. At serine 2335 the chain carries Phosphoserine. The residue at position 2342 (arginine 2342) is an Omega-N-methylarginine. Serine 2343, serine 2368, and serine 2376 each carry phosphoserine. Position 2381 is a phosphothreonine (threonine 2381). Position 2382 is a phosphoserine (serine 2382). An Asymmetric dimethylarginine; alternate modification is found at arginine 2384. The residue at position 2384 (arginine 2384) is an Omega-N-methylarginine; alternate. Residues 2389 to 2752 form a disordered region; it reads AYERVSGRTS…PMRHRSSRSP (364 aa). Phosphoserine occurs at positions 2394, 2398, and 2407. Threonine 2409 is subject to Phosphothreonine. Phosphoserine occurs at positions 2412, 2415, 2426, 2429, 2449, and 2453. Over residues 2426 to 2439 the composition is skewed to polar residues; it reads SPSSRMGQAPSQSL. Over residues 2455-2473 the composition is skewed to polar residues; sequence FSDQSRCLIAQTTPVAGSQ. 3 stretches are compositionally biased toward low complexity: residues 2474–2487, 2515–2526, and 2533–2567; these read SLSS…TSSA, AQQPSALAALQP, and SSSS…EGSS. Serine 2581 bears the Phosphoserine mark. Threonine 2583 carries the post-translational modification Phosphothreonine. A Glycyl lysine isopeptide (Lys-Gly) (interchain with G-Cter in SUMO2) cross-link involves residue lysine 2587. Threonine 2599 carries the post-translational modification Phosphothreonine. Low complexity predominate over residues 2608–2648; that stretch reads SSSSSSSSSSSSSSSSSSSSSSSSSSSSSSSSSSSSSSSSS. The segment covering 2651–2668 has biased composition (pro residues); that stretch reads PAKPGPQALPKPASPKKP. Serine 2664, serine 2675, serine 2677, serine 2684, serine 2688, serine 2690, serine 2692, serine 2694, serine 2702, and serine 2706 each carry phosphoserine. The segment covering 2669–2689 has biased composition (basic and acidic residues); sequence PPGERRSRSPRKPIDSLRDSR. Residues 2707-2716 are compositionally biased toward low complexity; sequence PRDQQSSSSE. Residues 2717 to 2729 show a composition bias toward basic and acidic residues; sequence RGSRRGQRGDSRS. The residue at position 2738 (threonine 2738) is a Phosphothreonine. The residue at position 2740 (serine 2740) is a Phosphoserine. A compositionally biased stretch (basic residues) spans 2743–2752; the sequence is PMRHRSSRSP.

The protein belongs to the CWC21 family. Component of pre-catalytic, catalytic and post-catalytic spliceosome complexes. Found in a pre-mRNA splicing complex with SFRS4, SFRS5, SNRP70, SNRPA1, SRRM1 and SRRM2. Component of the minor spliceosome, which splices U12-type introns. Interacts with DHX8. Interacts with CACTIN. Expressed in liver, placenta, and white blood cells.

It localises to the nucleus. The protein localises to the nucleus speckle. Its function is as follows. Required for pre-mRNA splicing as component of the spliceosome. As a component of the minor spliceosome, involved in the splicing of U12-type introns in pre-mRNAs. This is Serine/arginine repetitive matrix protein 2 (SRRM2) from Homo sapiens (Human).